A 109-amino-acid polypeptide reads, in one-letter code: Class I hydrophobin SC1 (109 aa).

The signal sequence occupies residues 1–22 (MRFSLAILALPVLAAATAVPRG). 4 disulfides stabilise this stretch: Cys-27/Cys-88, Cys-34/Cys-82, Cys-35/Cys-69, and Cys-89/Cys-102.

Belongs to the fungal hydrophobin family. In terms of assembly, self-assembles to form functional amyloid fibrils called rodlets. Self-assembly into fibrillar rodlets occurs spontaneously at hydrophobic:hydrophilic interfaces and the rodlets further associate laterally to form amphipathic monolayers.

It localises to the secreted. The protein resides in the cell wall. Aerial growth, conidiation, and dispersal of filamentous fungi in the environment rely upon a capability of their secreting small amphipathic proteins called hydrophobins (HPBs) with low sequence identity. Class I can self-assemble into an outermost layer of rodlet bundles on aerial cell surfaces, conferring cellular hydrophobicity that supports fungal growth, development and dispersal; whereas Class II form highly ordered films at water-air interfaces through intermolecular interactions but contribute nothing to the rodlet structure. SC1 is a dikaryon-specific class I hydrophobin that contributes to the formation of aerial hyphae and fruiting bodies. In Schizophyllum commune (Split gill fungus), this protein is Class I hydrophobin SC1.